The chain runs to 296 residues: Probable transcription factor At1g44810 (296 aa).

The segment at 1-119 (MNKKLLNPLE…AKKVSGDDDN (119 aa)) is disordered. Residues 19–28 (EDVDEEISSG) are compositionally biased toward acidic residues. Residues 52–72 (TQTLNSPSTEAPTLDSGSETN) show a composition bias toward polar residues. The span at 97 to 119 (RASEGTSSKDIKRAKKVSGDDDN) shows a compositional bias: basic and acidic residues.

Belongs to the GeBP family.

This chain is Probable transcription factor At1g44810, found in Arabidopsis thaliana (Mouse-ear cress).